Consider the following 417-residue polypeptide: Gamma-glutamyl phosphate reductase (417 aa).

The protein belongs to the gamma-glutamyl phosphate reductase family.

The protein resides in the cytoplasm. It carries out the reaction L-glutamate 5-semialdehyde + phosphate + NADP(+) = L-glutamyl 5-phosphate + NADPH + H(+). The protein operates within amino-acid biosynthesis; L-proline biosynthesis; L-glutamate 5-semialdehyde from L-glutamate: step 2/2. Catalyzes the NADPH-dependent reduction of L-glutamate 5-phosphate into L-glutamate 5-semialdehyde and phosphate. The product spontaneously undergoes cyclization to form 1-pyrroline-5-carboxylate. This is Gamma-glutamyl phosphate reductase from Escherichia fergusonii (strain ATCC 35469 / DSM 13698 / CCUG 18766 / IAM 14443 / JCM 21226 / LMG 7866 / NBRC 102419 / NCTC 12128 / CDC 0568-73).